The sequence spans 285 residues: Protoheme IX farnesyltransferase (285 aa).

Helical transmembrane passes span 19-39, 40-60, 90-110, 111-131, 135-155, 165-185, 220-240, and 265-285; these read RIIW…GKLM, PLSI…SMII, AIYV…LDNP, LTSF…TVWL, SPLN…AGYA, SILL…ALAL, IPFA…VAGI, and FKFS…TRLI.

This sequence belongs to the UbiA prenyltransferase family. Protoheme IX farnesyltransferase subfamily.

Its subcellular location is the cell membrane. The enzyme catalyses heme b + (2E,6E)-farnesyl diphosphate + H2O = Fe(II)-heme o + diphosphate. Its pathway is porphyrin-containing compound metabolism; heme O biosynthesis; heme O from protoheme: step 1/1. Its function is as follows. Converts heme B (protoheme IX) to heme O by substitution of the vinyl group on carbon 2 of heme B porphyrin ring with a hydroxyethyl farnesyl side group. In Metallosphaera sedula (strain ATCC 51363 / DSM 5348 / JCM 9185 / NBRC 15509 / TH2), this protein is Protoheme IX farnesyltransferase.